Consider the following 154-residue polypeptide: Probable transcription factor At4g00232 (154 aa).

Positions 1–44 (MDKANTNRSKVCGGSGEAKLTGKKRKNVSAKQSKKDAKKENSQM) are disordered.

It belongs to the GeBP family.

The protein is Probable transcription factor At4g00232 of Arabidopsis thaliana (Mouse-ear cress).